A 160-amino-acid chain; its full sequence is ATP synthase subunit b (160 aa).

The helical transmembrane segment at 12–32 threads the bilayer; that stretch reads ISFVLFVWFCMKYVWYPFISI.

It belongs to the ATPase B chain family. As to quaternary structure, F-type ATPases have 2 components, F(1) - the catalytic core - and F(0) - the membrane proton channel. F(1) has five subunits: alpha(3), beta(3), gamma(1), delta(1), epsilon(1). F(0) has three main subunits: a(1), b(2) and c(10-14). The alpha and beta chains form an alternating ring which encloses part of the gamma chain. F(1) is attached to F(0) by a central stalk formed by the gamma and epsilon chains, while a peripheral stalk is formed by the delta and b chains.

It is found in the cell inner membrane. In terms of biological role, f(1)F(0) ATP synthase produces ATP from ADP in the presence of a proton or sodium gradient. F-type ATPases consist of two structural domains, F(1) containing the extramembraneous catalytic core and F(0) containing the membrane proton channel, linked together by a central stalk and a peripheral stalk. During catalysis, ATP synthesis in the catalytic domain of F(1) is coupled via a rotary mechanism of the central stalk subunits to proton translocation. Functionally, component of the F(0) channel, it forms part of the peripheral stalk, linking F(1) to F(0). In Blochmanniella pennsylvanica (strain BPEN), this protein is ATP synthase subunit b.